The chain runs to 424 residues: Serine--tRNA ligase (424 aa).

231–233 contacts L-serine; the sequence is TAE. An ATP-binding site is contributed by 262-264; the sequence is RSE. Glu285 contributes to the L-serine binding site. Position 349-352 (349-352) interacts with ATP; that stretch reads EISS. Ser385 is an L-serine binding site.

This sequence belongs to the class-II aminoacyl-tRNA synthetase family. Type-1 seryl-tRNA synthetase subfamily. Homodimer. The tRNA molecule binds across the dimer.

The protein localises to the cytoplasm. It catalyses the reaction tRNA(Ser) + L-serine + ATP = L-seryl-tRNA(Ser) + AMP + diphosphate + H(+). The enzyme catalyses tRNA(Sec) + L-serine + ATP = L-seryl-tRNA(Sec) + AMP + diphosphate + H(+). The protein operates within aminoacyl-tRNA biosynthesis; selenocysteinyl-tRNA(Sec) biosynthesis; L-seryl-tRNA(Sec) from L-serine and tRNA(Sec): step 1/1. In terms of biological role, catalyzes the attachment of serine to tRNA(Ser). Is also able to aminoacylate tRNA(Sec) with serine, to form the misacylated tRNA L-seryl-tRNA(Sec), which will be further converted into selenocysteinyl-tRNA(Sec). The chain is Serine--tRNA ligase from Bacillus cereus (strain AH187).